The primary structure comprises 329 residues: GTP 3',8-cyclase (329 aa).

One can recognise a Radical SAM core domain in the interval 8–234 (AFARKFYYLR…QLRQRSDGPA (227 aa)). Residue arginine 17 coordinates GTP. The [4Fe-4S] cluster site is built by cysteine 24 and cysteine 28. Tyrosine 30 provides a ligand contact to S-adenosyl-L-methionine. Cysteine 31 provides a ligand contact to [4Fe-4S] cluster. Arginine 68 is a GTP binding site. Position 72 (glycine 72) interacts with S-adenosyl-L-methionine. Threonine 99 contributes to the GTP binding site. Serine 123 is an S-adenosyl-L-methionine binding site. Position 160 (lysine 160) interacts with GTP. Methionine 194 serves as a coordination point for S-adenosyl-L-methionine. Residues cysteine 257 and cysteine 260 each contribute to the [4Fe-4S] cluster site. GTP is bound at residue 262-264 (RLR). Residue cysteine 274 participates in [4Fe-4S] cluster binding.

This sequence belongs to the radical SAM superfamily. MoaA family. As to quaternary structure, monomer and homodimer. The cofactor is [4Fe-4S] cluster.

The enzyme catalyses GTP + AH2 + S-adenosyl-L-methionine = (8S)-3',8-cyclo-7,8-dihydroguanosine 5'-triphosphate + 5'-deoxyadenosine + L-methionine + A + H(+). It participates in cofactor biosynthesis; molybdopterin biosynthesis. In terms of biological role, catalyzes the cyclization of GTP to (8S)-3',8-cyclo-7,8-dihydroguanosine 5'-triphosphate. In Escherichia coli O127:H6 (strain E2348/69 / EPEC), this protein is GTP 3',8-cyclase.